A 406-amino-acid polypeptide reads, in one-letter code: Imidazolonepropionase (406 aa).

Histidine 74 and histidine 76 together coordinate Fe(3+). Zn(2+)-binding residues include histidine 74 and histidine 76. Positions 83, 146, and 179 each coordinate 4-imidazolone-5-propanoate. Position 146 (tyrosine 146) interacts with N-formimidoyl-L-glutamate. Residue histidine 240 participates in Fe(3+) binding. Zn(2+) is bound at residue histidine 240. 4-imidazolone-5-propanoate is bound at residue glutamate 243. Position 314 (aspartate 314) interacts with Fe(3+). Aspartate 314 lines the Zn(2+) pocket. N-formimidoyl-L-glutamate-binding residues include asparagine 316 and glycine 318. 4-imidazolone-5-propanoate is bound at residue serine 319.

The protein belongs to the metallo-dependent hydrolases superfamily. HutI family. The cofactor is Zn(2+). Fe(3+) serves as cofactor.

It localises to the cytoplasm. The catalysed reaction is 4-imidazolone-5-propanoate + H2O = N-formimidoyl-L-glutamate. Its pathway is amino-acid degradation; L-histidine degradation into L-glutamate; N-formimidoyl-L-glutamate from L-histidine: step 3/3. Its function is as follows. Catalyzes the hydrolytic cleavage of the carbon-nitrogen bond in imidazolone-5-propanoate to yield N-formimidoyl-L-glutamate. It is the third step in the universal histidine degradation pathway. The protein is Imidazolonepropionase of Kosmotoga olearia (strain ATCC BAA-1733 / DSM 21960 / TBF 19.5.1).